Consider the following 60-residue polypeptide: Ferredoxin (60 aa).

4Fe-4S ferredoxin-type domains lie at 2–29 and 30–60; these read KVRVDADACIGCGVCENLCPDVFQLGDD and GKAKVLQPETDLPCAKDAADSCPTGAISVEE. [4Fe-4S] cluster is bound by residues Cys-10, Cys-13, and Cys-16. A disulfide bond links Cys-20 and Cys-43. A [4Fe-4S] cluster-binding site is contributed by Cys-51.

In terms of assembly, monomer. [4Fe-4S] cluster is required as a cofactor.

Its function is as follows. Ferredoxins are iron-sulfur proteins that transfer electrons in a wide variety of metabolic reactions. The sequence is that of Ferredoxin (fdx) from Thermotoga maritima (strain ATCC 43589 / DSM 3109 / JCM 10099 / NBRC 100826 / MSB8).